We begin with the raw amino-acid sequence, 396 residues long: Na(+)/H(+) antiporter NhaA (396 aa).

11 consecutive transmembrane segments (helical) span residues 16-36, 59-79, 95-115, 124-144, 154-174, 178-198, 213-233, 254-274, 278-298, 328-348, and 363-383; these read GIIL…GLAG, LLLW…GLEV, TFPA…YAFF, AGWA…MALL, VFLL…IALF, QLSL…LWMN, LVLW…GVIV, ALHP…NAGV, GIGL…GLFI, IFAV…IASL, and LGIL…LRIA.

Belongs to the NhaA Na(+)/H(+) (TC 2.A.33) antiporter family.

Its subcellular location is the cell inner membrane. It catalyses the reaction Na(+)(in) + 2 H(+)(out) = Na(+)(out) + 2 H(+)(in). Its function is as follows. Na(+)/H(+) antiporter that extrudes sodium in exchange for external protons. The polypeptide is Na(+)/H(+) antiporter NhaA (Aeromonas hydrophila subsp. hydrophila (strain ATCC 7966 / DSM 30187 / BCRC 13018 / CCUG 14551 / JCM 1027 / KCTC 2358 / NCIMB 9240 / NCTC 8049)).